A 145-amino-acid polypeptide reads, in one-letter code: Basic phospholipase A2 cL037 (145 aa).

The N-terminal stretch at 1–21 (MYPAHLLVLLAVCVSLLGASA) is a signal peptide. The propeptide occupies 22-27 (ILPLPL). 7 disulfide bridges follow: Cys-38/Cys-98, Cys-54/Cys-144, Cys-56/Cys-72, Cys-71/Cys-125, Cys-78/Cys-118, Cys-87/Cys-111, and Cys-105/Cys-116. The Ca(2+) site is built by Tyr-55, Gly-57, and Gly-59. His-75 is an active-site residue. Residue Asp-76 coordinates Ca(2+). The active site involves Asp-119.

The protein belongs to the phospholipase A2 family. Group I subfamily. D49 sub-subfamily. Ca(2+) is required as a cofactor. Expressed by the venom gland.

The protein localises to the secreted. The catalysed reaction is a 1,2-diacyl-sn-glycero-3-phosphocholine + H2O = a 1-acyl-sn-glycero-3-phosphocholine + a fatty acid + H(+). PLA2 catalyzes the calcium-dependent hydrolysis of the 2-acyl groups in 3-sn-phosphoglycerides. The chain is Basic phospholipase A2 cL037 from Laticauda semifasciata (Black-banded sea krait).